Here is a 486-residue protein sequence, read N- to C-terminus: MKSLDQLVFDNRFARLGDAFSTQVLPDPIADPRLVVASEAAMALLDLDPAQADLPVFAELFSGHKLWEEADPRAMVYSGHQFGSYNPRLGDGRGLLLGEVVNDAGEHWDLHLKGAGQTPYSRMGDGRAVLRSSIREFLASEALHALGIPSSRALCVIGSSATVWRETRETAAMLLRLAHSHVRFGHFEYFYYTQQPEQQRLLIDHVLEQHYPECREAEQPYLAMFRTIVERNAELIARWQAYGFCHGVMNTDNMSILGITFDFGPYAFLDDFDANFICNHSDDRGRYSYANQVPIAHWNLSALAQALTTVIEVEPLKEALGLFLPLYQAHYLDLMRRRLGLTTAEDDDMALVERLLQRMQSGGVDYTLFFRKLGERPVAEALKVVRDDFVDLAGFDAWGVEYLARCEREPGNAEGRRERMQAVNPLYVLRNYLAQKAIEAAEAGDYSEVRRLHQVLSRPFEEQPGMQAYAERPPEWGKHLEISCSS.

8 residues coordinate ATP: Gly-90, Gly-92, Arg-93, Lys-113, Asp-125, Gly-126, Arg-176, and Arg-183. Asp-252 acts as the Proton acceptor in catalysis. Mg(2+) is bound by residues Asn-253 and Asp-262. Asp-262 provides a ligand contact to ATP.

The protein belongs to the SELO family. The cofactor is Mg(2+). Requires Mn(2+) as cofactor.

The catalysed reaction is L-seryl-[protein] + ATP = 3-O-(5'-adenylyl)-L-seryl-[protein] + diphosphate. It catalyses the reaction L-threonyl-[protein] + ATP = 3-O-(5'-adenylyl)-L-threonyl-[protein] + diphosphate. It carries out the reaction L-tyrosyl-[protein] + ATP = O-(5'-adenylyl)-L-tyrosyl-[protein] + diphosphate. The enzyme catalyses L-histidyl-[protein] + UTP = N(tele)-(5'-uridylyl)-L-histidyl-[protein] + diphosphate. The catalysed reaction is L-seryl-[protein] + UTP = O-(5'-uridylyl)-L-seryl-[protein] + diphosphate. It catalyses the reaction L-tyrosyl-[protein] + UTP = O-(5'-uridylyl)-L-tyrosyl-[protein] + diphosphate. In terms of biological role, nucleotidyltransferase involved in the post-translational modification of proteins. It can catalyze the addition of adenosine monophosphate (AMP) or uridine monophosphate (UMP) to a protein, resulting in modifications known as AMPylation and UMPylation. In Pseudomonas entomophila (strain L48), this protein is Protein nucleotidyltransferase YdiU.